The following is a 296-amino-acid chain: Low affinity immunoglobulin gamma Fc region receptor II (296 aa).

An N-terminal signal peptide occupies residues 1-42; that stretch reads MGIPSFLAFPAARRNRAHCTPWHPWGHMLLWTALLFLAPVSG. Over 43–225 the chain is Extracellular; it reads KPDLPKAVVT…SSSSGPSSMT (183 aa). Ig-like C2-type domains lie at 47-129 and 130-212; these read PKAV…DVIS and DWLL…VNIT. 2 cysteine pairs are disulfide-bonded: Cys70–Cys112 and Cys151–Cys195. N-linked (GlcNAc...) asparagine glycosylation is found at Asn79, Asn86, Asn105, Asn179, Asn186, and Asn210. A helical membrane pass occupies residues 226–246; the sequence is AVAIGTCFAAVAIVAAIITWF. Residues 247–296 lie on the Cytoplasmic side of the membrane; the sequence is RLRRKPISAGLTDAENDAARTEAENTVTYSLLSHPDVAEEDSESDYQKRL. An ITIM motif motif is present at residues 273 to 278; the sequence is VTYSLL. Position 275 is a phosphotyrosine; by SRC-type Tyr-kinases (Tyr275). The residue at position 288 (Ser288) is a Phosphoserine. Tyr292 bears the Phosphotyrosine mark.

As to quaternary structure, interacts with FGR and LYN. Post-translationally, phosphorylated by SRC-type Tyr-kinases such as LYN, BLK, FYN and SYK. In terms of tissue distribution, higher expression is found in macrophages than in neutrophils.

The protein resides in the cell membrane. Functionally, binds to the Fc region of immunoglobulins gamma. Low affinity receptor. The polypeptide is Low affinity immunoglobulin gamma Fc region receptor II (FCGR2) (Bos taurus (Bovine)).